Reading from the N-terminus, the 353-residue chain is Photosystem II protein D1 (353 aa).

Residue Thr2 is modified to N-acetylthreonine. Thr2 carries the phosphothreonine modification. Helical transmembrane passes span 29–46, 118–133, and 142–156; these read YIGW…TATS, HFLL…EWEL, and WIAV…AATA. His118 lines the chlorophyll a pocket. Position 126 (Tyr126) interacts with pheophytin a. [CaMn4O5] cluster contacts are provided by Asp170 and Glu189. Residues 197–218 form a helical membrane-spanning segment; it reads FHMLGVAGVFGGSLFSAMHGSL. His198 contributes to the chlorophyll a binding site. A quinone-binding positions include His215 and 264-265; that span reads SF. A Fe cation-binding site is contributed by His215. His272 is a binding site for Fe cation. A helical transmembrane segment spans residues 274–288; that stretch reads FLAAWPVVGIWFTAL. Residues His332, Glu333, Asp342, and Ala344 each coordinate [CaMn4O5] cluster. The propeptide occupies 345–353; that stretch reads AVEAPSTNG.

The protein belongs to the reaction center PufL/M/PsbA/D family. PSII is composed of 1 copy each of membrane proteins PsbA, PsbB, PsbC, PsbD, PsbE, PsbF, PsbH, PsbI, PsbJ, PsbK, PsbL, PsbM, PsbT, PsbX, PsbY, PsbZ, Psb30/Ycf12, at least 3 peripheral proteins of the oxygen-evolving complex and a large number of cofactors. It forms dimeric complexes. The cofactor is The D1/D2 heterodimer binds P680, chlorophylls that are the primary electron donor of PSII, and subsequent electron acceptors. It shares a non-heme iron and each subunit binds pheophytin, quinone, additional chlorophylls, carotenoids and lipids. D1 provides most of the ligands for the Mn4-Ca-O5 cluster of the oxygen-evolving complex (OEC). There is also a Cl(-1) ion associated with D1 and D2, which is required for oxygen evolution. The PSII complex binds additional chlorophylls, carotenoids and specific lipids.. Post-translationally, tyr-161 forms a radical intermediate that is referred to as redox-active TyrZ, YZ or Y-Z. In terms of processing, C-terminally processed by CTPA; processing is essential to allow assembly of the oxygen-evolving complex and thus photosynthetic growth.

Its subcellular location is the plastid. It is found in the chloroplast thylakoid membrane. The catalysed reaction is 2 a plastoquinone + 4 hnu + 2 H2O = 2 a plastoquinol + O2. Its function is as follows. Photosystem II (PSII) is a light-driven water:plastoquinone oxidoreductase that uses light energy to abstract electrons from H(2)O, generating O(2) and a proton gradient subsequently used for ATP formation. It consists of a core antenna complex that captures photons, and an electron transfer chain that converts photonic excitation into a charge separation. The D1/D2 (PsbA/PsbD) reaction center heterodimer binds P680, the primary electron donor of PSII as well as several subsequent electron acceptors. The sequence is that of Photosystem II protein D1 from Lepidium virginicum (Virginia pepperweed).